A 279-amino-acid polypeptide reads, in one-letter code: uncharacterized protein (279 aa).

Composition is skewed to low complexity over residues 1 to 25 (MNEN…NNNN), 86 to 151 (PSQS…NGNN), and 232 to 250 (NKNN…DDNN). Disordered regions lie at residues 1 to 27 (MNEN…NNIK), 83 to 153 (NLFP…NNID), and 213 to 260 (QSVN…KVKS).

This is an uncharacterized protein from Dictyostelium discoideum (Social amoeba).